A 359-amino-acid chain; its full sequence is Tryptophan 2,3-dioxygenase (359 aa).

Substrate is bound by residues 38–42 (FIIVH) and Arg109. His295 provides a ligand contact to heme. Thr309 contributes to the substrate binding site.

This sequence belongs to the tryptophan 2,3-dioxygenase family. In terms of assembly, homotetramer. Heme serves as cofactor.

It carries out the reaction L-tryptophan + O2 = N-formyl-L-kynurenine. The protein operates within amino-acid degradation; L-tryptophan degradation via kynurenine pathway; L-kynurenine from L-tryptophan: step 1/2. Functionally, heme-dependent dioxygenase that catalyzes the oxidative cleavage of the L-tryptophan (L-Trp) pyrrole ring and converts L-tryptophan to N-formyl-L-kynurenine. Catalyzes the oxidative cleavage of the indole moiety. The polypeptide is Tryptophan 2,3-dioxygenase (Bdellovibrio bacteriovorus (strain ATCC 15356 / DSM 50701 / NCIMB 9529 / HD100)).